The chain runs to 598 residues: ATP-dependent lipid A-core flippase (598 aa).

The segment covering 1 to 15 (MSQAYQPDSTKTSAK) has biased composition (polar residues). The interval 1 to 21 (MSQAYQPDSTKTSAKTPVAPT) is disordered. 4 helical membrane passes run 44 to 64 (WWAILLTIIGFAINAATEIWI), 85 to 105 (LFPFIIVMLFFVRGVGSFLGN), 172 to 192 (VVALMGFLLYSNWRLTLILFV), and 269 to 289 (INTPAVQLLMAMAMAVVVWLA). The ABC transmembrane type-1 domain maps to 48–329 (LLTIIGFAIN…LTDVNQQLQR (282 aa)). The 236-residue stretch at 360–595 (IKLDNVSLVY…HGHYAQMYAR (236 aa)) folds into the ABC transporter domain. 393-400 (GRSGAGKS) is a binding site for ATP.

This sequence belongs to the ABC transporter superfamily. Lipid exporter (TC 3.A.1.106) family. Homodimer.

It is found in the cell inner membrane. It carries out the reaction ATP + H2O + lipid A-core oligosaccharideSide 1 = ADP + phosphate + lipid A-core oligosaccharideSide 2.. Involved in lipopolysaccharide (LPS) biosynthesis. Translocates lipid A-core from the inner to the outer leaflet of the inner membrane. Transmembrane domains (TMD) form a pore in the inner membrane and the ATP-binding domain (NBD) is responsible for energy generation. The protein is ATP-dependent lipid A-core flippase of Psychrobacter cryohalolentis (strain ATCC BAA-1226 / DSM 17306 / VKM B-2378 / K5).